Reading from the N-terminus, the 437-residue chain is Inactive peptidyl-prolyl cis-trans isomerase shutdown (437 aa).

The PPIase FKBP-type domain occupies 92–178 (DSEVTIHYAA…RPEPALFVIV (87 aa)). TPR repeat units follow at residues 209–242 (VNAL…LRLS), 258–294 (VNAY…EKHC), and 295–327 (KALY…EPKN).

This sequence belongs to the FKBP6 family. In terms of assembly, interacts with Hsp83.

Its subcellular location is the cytoplasm. Its function is as follows. Co-chaperone required during oogenesis to repress transposable elements and prevent their mobilization, which is essential for the germline integrity. Acts via the piRNA metabolic process, which mediates the repression of transposable elements during meiosis by forming complexes composed of piRNAs and Piwi proteins and govern the methylation and subsequent repression of transposons. Acts as a co-chaperone via its interaction with Hsp83/HSP90 and is required for the biogenesis of all three piRNA major populations. The chain is Inactive peptidyl-prolyl cis-trans isomerase shutdown (shu) from Bombyx mori (Silk moth).